The sequence spans 193 residues: uncharacterized protein (193 aa).

A coiled-coil region spans residues 86-181; it reads TKQRELLEIL…QVEEVQAEVG (96 aa).

This is an uncharacterized protein from Streptococcus pyogenes serotype M6 (strain ATCC BAA-946 / MGAS10394).